Here is a 675-residue protein sequence, read N- to C-terminus: UvrABC system protein B (675 aa).

A Helicase ATP-binding domain is found at 32–417 (EGLSDGLAYQ…EHAGQVVEQV (386 aa)). 45 to 52 (GVTGSGKT) lines the ATP pocket. A Beta-hairpin motif is present at residues 98-121 (YYDYYQPEAYVPSRDLFIEKDSAI). Residues 436–602 (QVDDLMSEIN…QIKKQVKDII (167 aa)) enclose the Helicase C-terminal domain. The 36-residue stretch at 634–669 (IKEIAKLEKAMQQAARDLQFEEAAVLRDRIRDIKEN) folds into the UVR domain.

Belongs to the UvrB family. Forms a heterotetramer with UvrA during the search for lesions. Interacts with UvrC in an incision complex.

Its subcellular location is the cytoplasm. Functionally, the UvrABC repair system catalyzes the recognition and processing of DNA lesions. A damage recognition complex composed of 2 UvrA and 2 UvrB subunits scans DNA for abnormalities. Upon binding of the UvrA(2)B(2) complex to a putative damaged site, the DNA wraps around one UvrB monomer. DNA wrap is dependent on ATP binding by UvrB and probably causes local melting of the DNA helix, facilitating insertion of UvrB beta-hairpin between the DNA strands. Then UvrB probes one DNA strand for the presence of a lesion. If a lesion is found the UvrA subunits dissociate and the UvrB-DNA preincision complex is formed. This complex is subsequently bound by UvrC and the second UvrB is released. If no lesion is found, the DNA wraps around the other UvrB subunit that will check the other stand for damage. The protein is UvrABC system protein B of Neisseria meningitidis serogroup B (strain ATCC BAA-335 / MC58).